Consider the following 378-residue polypeptide: Lipoyl synthase, mitochondrial (378 aa).

[4Fe-4S] cluster contacts are provided by C109, C114, C120, C140, C144, C147, and S356. The region spanning 125–345 is the Radical SAM core domain; the sequence is ETGTATATIM…QTLGMEMGFR (221 aa).

It belongs to the radical SAM superfamily. Lipoyl synthase family. The cofactor is [4Fe-4S] cluster.

The protein resides in the mitochondrion. The catalysed reaction is [[Fe-S] cluster scaffold protein carrying a second [4Fe-4S](2+) cluster] + N(6)-octanoyl-L-lysyl-[protein] + 2 oxidized [2Fe-2S]-[ferredoxin] + 2 S-adenosyl-L-methionine + 4 H(+) = [[Fe-S] cluster scaffold protein] + N(6)-[(R)-dihydrolipoyl]-L-lysyl-[protein] + 4 Fe(3+) + 2 hydrogen sulfide + 2 5'-deoxyadenosine + 2 L-methionine + 2 reduced [2Fe-2S]-[ferredoxin]. It functions in the pathway protein modification; protein lipoylation via endogenous pathway; protein N(6)-(lipoyl)lysine from octanoyl-[acyl-carrier-protein]: step 2/2. In terms of biological role, catalyzes the radical-mediated insertion of two sulfur atoms into the C-6 and C-8 positions of the octanoyl moiety bound to the lipoyl domains of lipoate-dependent enzymes, thereby converting the octanoylated domains into lipoylated derivatives. The chain is Lipoyl synthase, mitochondrial from Medicago truncatula (Barrel medic).